Reading from the N-terminus, the 708-residue chain is O-antigen chain terminator bifunctional methyltransferase/kinase WbdD (708 aa).

The tract at residues 1 to 210 (MTKDLNTLVS…VPRPMYLVSN (210 aa)) is methyltransferase. Residues 16 to 17 (YQ), Arg-36, Gly-61, 82 to 87 (DFQQEN), 108 to 111 (GRIE), and Leu-128 each bind S-adenosyl-L-methionine. The tract at residues 211 to 459 (HRVLINDFNQ…AKLPSAEQQR (249 aa)) is kinase. Residues Pro-229, His-237, 241-243 (RRY), Lys-252, Glu-274, 309-311 (EKL), Met-358, and Asp-369 each bind ATP. Residues 485 to 594 (AGSEALRGQI…EIEKIHRSRS (110 aa)) are a coiled coil. Residues 601–669 (YRYLGLQIHL…RLYRRMNPLP (69 aa)) form a required for membrane-binding region. The tract at residues 687–708 (VMHPELLPPEVYEIYLKLTKNK) is required for localizing WbdA to the membrane.

Belongs to the WbdD family. As to quaternary structure, homotrimer in solution. Interacts with WbdA.

The protein localises to the cell inner membrane. The catalysed reaction is 3-O-phospho-alpha-D-Man-(1-&gt;2)-alpha-D-Man-(1-&gt;2)-[alpha-D-Man-(1-&gt;3)-alpha-D-Man-(1-&gt;3)-alpha-D-Man-(1-&gt;2)-alpha-D-Man-(1-&gt;2)](n)-alpha-D-Man-(1-&gt;3)-alpha-D-Man-(1-&gt;3)-alpha-D-Man-(1-&gt;3)-alpha-D-GlcNAc-di-trans,octa-cis-undecaprenyl diphosphate + S-adenosyl-L-methionine = 3-O-methylphospho-alpha-D-Man-(1-&gt;2)-alpha-D-Man-(1-&gt;2)-[alpha-D-Man-(1-&gt;3)-alpha-D-Man-(1-&gt;3)-alpha-D-Man-(1-&gt;2)-alpha-D-Man-(1-&gt;2)](n)-alpha-D-Man-(1-&gt;3)-alpha-D-Man-(1-&gt;3)-alpha-D-Man-(1-&gt;3)-alpha-D-GlcNAc-di-trans,octa-cis-undecaprenyl diphosphate + S-adenosyl-L-homocysteine. It carries out the reaction alpha-D-Man-(1-&gt;2)-alpha-D-Man-(1-&gt;2)-[alpha-D-Man-(1-&gt;3)-alpha-D-Man-(1-&gt;3)-alpha-D-Man-(1-&gt;2)-alpha-D-Man-(1-&gt;2)](n)-alpha-D-Man-(1-&gt;3)-alpha-D-Man-(1-&gt;3)-alpha-D-Man-(1-&gt;3)-alpha-D-GlcNAc-di-trans,octa-cis-undecaprenyl diphosphate + ATP = 3-O-phospho-alpha-D-Man-(1-&gt;2)-alpha-D-Man-(1-&gt;2)-[alpha-D-Man-(1-&gt;3)-alpha-D-Man-(1-&gt;3)-alpha-D-Man-(1-&gt;2)-alpha-D-Man-(1-&gt;2)](n)-alpha-D-Man-(1-&gt;3)-alpha-D-Man-(1-&gt;3)-alpha-D-Man-(1-&gt;3)-alpha-D-GlcNAc-di-trans,octa-cis-undecaprenyl diphosphate + ADP + H(+). It functions in the pathway bacterial outer membrane biogenesis; LPS O-antigen biosynthesis. Its function is as follows. Regulates the length of the LPS O-antigen polysaccharide chain. Stops the polymerization of the chain by phosphorylating and then methylating the phosphate on the terminal sugar. This terminal modification is essential for export of the O-antigen across the inner membrane. WbdD is also required for correct localization of the WbdA mannosyltransferase. This is O-antigen chain terminator bifunctional methyltransferase/kinase WbdD from Escherichia coli.